Here is a 421-residue protein sequence, read N- to C-terminus: Gamma-glutamyl phosphate reductase (421 aa).

This sequence belongs to the gamma-glutamyl phosphate reductase family.

The protein localises to the cytoplasm. The enzyme catalyses L-glutamate 5-semialdehyde + phosphate + NADP(+) = L-glutamyl 5-phosphate + NADPH + H(+). It functions in the pathway amino-acid biosynthesis; L-proline biosynthesis; L-glutamate 5-semialdehyde from L-glutamate: step 2/2. In terms of biological role, catalyzes the NADPH-dependent reduction of L-glutamate 5-phosphate into L-glutamate 5-semialdehyde and phosphate. The product spontaneously undergoes cyclization to form 1-pyrroline-5-carboxylate. The protein is Gamma-glutamyl phosphate reductase of Shewanella pealeana (strain ATCC 700345 / ANG-SQ1).